The chain runs to 359 residues: Stearoyl-CoA desaturase (359 aa).

At 1-72 (MPAHLLQEEI…EGPKPKLEYV (72 aa)) the chain is on the cytoplasmic side. Residues 73–93 (WRNIILMGLLHLGALYGITLI) form a helical membrane-spanning segment. N75 contributes to the substrate binding site. Residues 94 to 97 (PTCK) are Lumenal-facing. Residues 98-118 (IYTFLWVLFYYMMSALGITAG) traverse the membrane as a helical segment. Topologically, residues 119 to 217 (VHRLWSHRTY…EKLVMFQRRY (99 aa)) are cytoplasmic. H120 and H125 together coordinate Fe cation. The Histidine box-1 motif lies at 120–125 (HRLWSH). Substrate is bound by residues N148, R155, and D156. Fe cation is bound by residues H157, H160, and H161. Positions 157–161 (HRAHH) match the Histidine box-2 motif. Residues R188 and K189 each coordinate substrate. A Phosphoserine modification is found at S203. The chain crosses the membrane as a helical span at residues 218 to 237 (YKPGVLLLCFILPTLVPWYL). Residues 238 to 241 (WGET) are Lumenal-facing. Residues 242 to 263 (FQNSLFFATLLRYAVVLNATWL) form a helical membrane-spanning segment. Position 262 (W262) interacts with substrate. The Cytoplasmic segment spans residues 264–359 (VNSAAHMYGY…RTGEESCKSG (96 aa)). H269, H298, H301, and H302 together coordinate Fe cation. The Histidine box-3 signature appears at 298–302 (HNYHH).

Belongs to the fatty acid desaturase type 1 family. It depends on Fe(2+) as a cofactor.

Its subcellular location is the endoplasmic reticulum membrane. It carries out the reaction octadecanoyl-CoA + 2 Fe(II)-[cytochrome b5] + O2 + 2 H(+) = (9Z)-octadecenoyl-CoA + 2 Fe(III)-[cytochrome b5] + 2 H2O. It catalyses the reaction hexadecanoyl-CoA + 2 Fe(II)-[cytochrome b5] + O2 + 2 H(+) = (9Z)-hexadecenoyl-CoA + 2 Fe(III)-[cytochrome b5] + 2 H2O. In terms of biological role, stearoyl-CoA desaturase that utilizes O(2) and electrons from reduced cytochrome b5 to introduce the first double bond into saturated fatty acyl-CoA substrates. Catalyzes the insertion of a cis double bond at the delta-9 position into fatty acyl-CoA substrates including palmitoyl-CoA and stearoyl-CoA. Gives rise to a mixture of 16:1 and 18:1 unsaturated fatty acids. Plays an important role in lipid biosynthesis. Plays an important role in regulating the expression of genes that are involved in lipogenesis and in regulating mitochondrial fatty acid oxidation. Plays an important role in body energy homeostasis. Contributes to the biosynthesis of membrane phospholipids, cholesterol esters and triglycerides. This Capra hircus (Goat) protein is Stearoyl-CoA desaturase (SCD).